A 662-amino-acid polypeptide reads, in one-letter code: Neurexin-2-beta (662 aa).

Residues 1–10 (MPPGGSGQGG) are compositionally biased toward gly residues. The segment at 1–27 (MPPGGSGQGGCPRRPPALAGPLPPPPP) is disordered. Positions 1–46 (MPPGGSGQGGCPRRPPALAGPLPPPPPPPPLPLLLGLLLLLGAAEG) are cleaved as a signal peptide. Residues 47–586 (ARVSSSLSTT…EVIRESSSTT (540 aa)) are Extracellular-facing. One can recognise a Laminin G-like domain in the interval 87-295 (TTYIFGKGGA…HLRLVGEGPS (209 aa)). Ca(2+) contacts are provided by aspartate 139 and valine 156. N-linked (GlcNAc...) asparagine glycosylation occurs at asparagine 186. Residues isoleucine 238 and asparagine 240 each coordinate Ca(2+). A glycan (O-linked (Xyl...) (heparan sulfate) serine) is linked at serine 350. 3 disordered regions span residues 408-458 (ATQD…LPPT), 476-496 (LLSP…ATGA), and 530-557 (LGPG…PGFP). The chain crosses the membrane as a helical span at residues 587–607 (GMVVGIVAAAALCILILLYAM). Residues 608-662 (YKYRNRDEGSYQVDQSRNYISNSAQSNGAVVKEKAPAAPKTPSKAKKNKDKEYYV) are Cytoplasmic-facing. A disordered region spans residues 629–662 (NSAQSNGAVVKEKAPAAPKTPSKAKKNKDKEYYV).

This sequence belongs to the neurexin family. Interacts (via cytoplasmic C-terminal region) with CASK. Isoform Beta 4b binds alpha-dystroglycan and neuroligins NLGN1, NLGN2 and NLGN3. Interacts with CBLN1, CBLN2 and, less avidly, with CBLN4. Interacts with CLSTN3. O-glycosylated; contains heparan sulfate. Heparan sulfate attachment is required for synapse development by mediating interactions with neuroligins. Brain (neuronal synapse).

It is found in the presynaptic cell membrane. Functionally, neuronal cell surface protein that may be involved in cell recognition and cell adhesion. In Rattus norvegicus (Rat), this protein is Neurexin-2-beta (Nrxn2).